The following is an 88-amino-acid chain: Large ribosomal subunit protein bL31B (88 aa).

Belongs to the bacterial ribosomal protein bL31 family. Type B subfamily. Part of the 50S ribosomal subunit.

This is Large ribosomal subunit protein bL31B from Bordetella pertussis (strain Tohama I / ATCC BAA-589 / NCTC 13251).